Consider the following 297-residue polypeptide: Large ribosomal subunit protein uL18 (297 aa).

It belongs to the universal ribosomal protein uL18 family. As to quaternary structure, component of the large ribosomal subunit (LSU).

Its subcellular location is the cytoplasm. The protein resides in the nucleus. Component of the ribosome, a large ribonucleoprotein complex responsible for the synthesis of proteins in the cell. The small ribosomal subunit (SSU) binds messenger RNAs (mRNAs) and translates the encoded message by selecting cognate aminoacyl-transfer RNA (tRNA) molecules. The large subunit (LSU) contains the ribosomal catalytic site termed the peptidyl transferase center (PTC), which catalyzes the formation of peptide bonds, thereby polymerizing the amino acids delivered by tRNAs into a polypeptide chain. The nascent polypeptides leave the ribosome through a tunnel in the LSU and interact with protein factors that function in enzymatic processing, targeting, and the membrane insertion of nascent chains at the exit of the ribosomal tunnel. The sequence is that of Large ribosomal subunit protein uL18 (RpL5) from Lysiphlebus testaceipes (Greenbugs aphid parastoid).